Consider the following 95-residue polypeptide: Small ribosomal subunit protein bS6 (95 aa).

The protein belongs to the bacterial ribosomal protein bS6 family.

Binds together with bS18 to 16S ribosomal RNA. This Corynebacterium kroppenstedtii (strain DSM 44385 / JCM 11950 / CIP 105744 / CCUG 35717) protein is Small ribosomal subunit protein bS6.